Here is a 74-residue protein sequence, read N- to C-terminus: Protein F9 homolog (74 aa).

The Virion surface portion of the chain corresponds to 1 to 34 (GHAAANCALARVATALTRRVPASRHGLAEGGTPP). A helical membrane pass occupies residues 35-55 (WTLLLAVAAVAVLGVVAISLL). Residues 56 to 73 (RRALRIRFRYSKSIQTLR) are Intravirion-facing.

It belongs to the chordopoxvirinae L1 protein family.

The protein resides in the virion membrane. The polypeptide is Protein F9 homolog (Capra hircus (Goat)).